The primary structure comprises 425 residues: Glutamyl-tRNA reductase (425 aa).

Substrate contacts are provided by residues 47–50 (TCNR), serine 107, 112–114 (EDQ), and glutamine 118. Catalysis depends on cysteine 48, which acts as the Nucleophile. 187–192 (GAGHMA) serves as a coordination point for NADP(+).

This sequence belongs to the glutamyl-tRNA reductase family. As to quaternary structure, homodimer.

The enzyme catalyses (S)-4-amino-5-oxopentanoate + tRNA(Glu) + NADP(+) = L-glutamyl-tRNA(Glu) + NADPH + H(+). The protein operates within porphyrin-containing compound metabolism; protoporphyrin-IX biosynthesis; 5-aminolevulinate from L-glutamyl-tRNA(Glu): step 1/2. It functions in the pathway porphyrin-containing compound metabolism; chlorophyll biosynthesis. Functionally, catalyzes the NADPH-dependent reduction of glutamyl-tRNA(Glu) to glutamate 1-semialdehyde (GSA). In Roseiflexus castenholzii (strain DSM 13941 / HLO8), this protein is Glutamyl-tRNA reductase.